A 293-amino-acid chain; its full sequence is Glutamyl-Q tRNA(Asp) synthetase (293 aa).

L-glutamate is bound by residues 26–30 (RFAPS) and Asp-62. A 'HIGH' region motif is present at residues 29-39 (PSPTGLLHLGN). Positions 118, 120, 131, and 135 each coordinate Zn(2+). Residues Tyr-178 and Arg-196 each coordinate L-glutamate. The 'KMSKS' region signature appears at 234 to 238 (KLSKR). Residue Lys-237 coordinates ATP.

It belongs to the class-I aminoacyl-tRNA synthetase family. GluQ subfamily. Requires Zn(2+) as cofactor.

In terms of biological role, catalyzes the tRNA-independent activation of glutamate in presence of ATP and the subsequent transfer of glutamate onto a tRNA(Asp). Glutamate is transferred on the 2-amino-5-(4,5-dihydroxy-2-cyclopenten-1-yl) moiety of the queuosine in the wobble position of the QUC anticodon. This chain is Glutamyl-Q tRNA(Asp) synthetase, found in Synechococcus sp. (strain CC9605).